A 390-amino-acid chain; its full sequence is DNA polymerase IV (390 aa).

Residues 6 to 187 (VMHVDLDAFF…LDIAVMPGIG (182 aa)) form the UmuC domain. Mg(2+)-binding residues include Asp-10 and Asp-105. The active site involves Glu-106.

Belongs to the DNA polymerase type-Y family. In terms of assembly, monomer. It depends on Mg(2+) as a cofactor.

It localises to the cytoplasm. The catalysed reaction is DNA(n) + a 2'-deoxyribonucleoside 5'-triphosphate = DNA(n+1) + diphosphate. Functionally, poorly processive, error-prone DNA polymerase involved in untargeted mutagenesis. Copies undamaged DNA at stalled replication forks, which arise in vivo from mismatched or misaligned primer ends. These misaligned primers can be extended by PolIV. Exhibits no 3'-5' exonuclease (proofreading) activity. May be involved in translesional synthesis, in conjunction with the beta clamp from PolIII. This is DNA polymerase IV from Dehalococcoides mccartyi (strain CBDB1).